The chain runs to 321 residues: Low affinity immunoglobulin epsilon Fc receptor (321 aa).

The Cytoplasmic portion of the chain corresponds to 1-21 (MEEGQYSEIEELPRRRCCRRG). Residues cysteine 17 and cysteine 18 are each lipidated (S-palmitoyl cysteine). The chain crosses the membrane as a helical; Signal-anchor for type II membrane protein span at residues 22–47 (TQIVLLGLVTAALWAGLLTLLLLWHW). Residues 48 to 321 (DTTQSLKQLE…LPTPSAPLHS (274 aa)) are Extracellular-facing. Asparagine 63 carries an N-linked (GlcNAc...) asparagine glycan. Residues 66–85 (QVSKNLESHHGDQMAQKSQS) are disordered. Repeats lie at residues 69–89 (KNLE…TQIS), 90–110 (QELE…LELS), and 111–131 (WNLN…LNER). Disulfide bonds link cysteine 160/cysteine 288, cysteine 163/cysteine 174, cysteine 191/cysteine 282, and cysteine 259/cysteine 273. One can recognise a C-type lectin domain in the interval 162–284 (TCPEKWINFQ…RKLGAWVCDR (123 aa)). Residues glutamate 249, threonine 251, asparagine 269, and aspartate 270 each contribute to the Ca(2+) site. The segment at 290–321 (PPASEGSAESMGPDSRPDPDGRLPTPSAPLHS) is disordered. Serine 296 carries an O-linked (Xyl...) (chondroitin sulfate) serine glycan.

As to quaternary structure, homotrimer. Interacts (via C-type lectin domain) with IGHE (via CH3 region); this interaction regulates IgE homeostasis. Interacts (via the C-terminus) with CR2/CD21 (via Sushi domain 1 and 2). In terms of processing, N- and O-glycosylated. The secreted form sCD23 is produced by ADAM10-mediated ectodomain shedding. As to expression, detected in urine (at protein level).

It is found in the cell membrane. Its subcellular location is the secreted. Functionally, low-affinity receptor for immunoglobulin E (IgE) and CR2/CD21. Has essential roles in the regulation of IgE production and in the differentiation of B cells. On B cells, initiates IgE-dependent antigen uptake and presentation to T cells. On macrophages, upon IgE binding and antigen cross-linking induces intracellular killing of parasites through activation of L-Arginine-nitric oxide pathway. The polypeptide is Low affinity immunoglobulin epsilon Fc receptor (FCER2) (Homo sapiens (Human)).